Here is a 306-residue protein sequence, read N- to C-terminus: Non-specific ribonucleoside hydrolase RihC (306 aa).

Residue His-235 is part of the active site.

Belongs to the IUNH family. RihC subfamily.

Its function is as follows. Hydrolyzes both purine and pyrimidine ribonucleosides with a broad-substrate specificity. This Salmonella paratyphi B (strain ATCC BAA-1250 / SPB7) protein is Non-specific ribonucleoside hydrolase RihC.